The sequence spans 389 residues: Anhydro-N-acetylmuramic acid kinase (389 aa).

11–18 (GTSLDGVD) lines the ATP pocket.

It belongs to the anhydro-N-acetylmuramic acid kinase family.

It catalyses the reaction 1,6-anhydro-N-acetyl-beta-muramate + ATP + H2O = N-acetyl-D-muramate 6-phosphate + ADP + H(+). It participates in amino-sugar metabolism; 1,6-anhydro-N-acetylmuramate degradation. Its pathway is cell wall biogenesis; peptidoglycan recycling. Its function is as follows. Catalyzes the specific phosphorylation of 1,6-anhydro-N-acetylmuramic acid (anhMurNAc) with the simultaneous cleavage of the 1,6-anhydro ring, generating MurNAc-6-P. Is required for the utilization of anhMurNAc either imported from the medium or derived from its own cell wall murein, and thus plays a role in cell wall recycling. This chain is Anhydro-N-acetylmuramic acid kinase, found in Albidiferax ferrireducens (strain ATCC BAA-621 / DSM 15236 / T118) (Rhodoferax ferrireducens).